A 67-amino-acid polypeptide reads, in one-letter code: ATP synthase protein 8 (67 aa).

Residues T8–F24 traverse the membrane as a helical segment. K54 is subject to N6-acetyllysine; alternate. K54 carries the post-translational modification N6-succinyllysine; alternate. An N6-acetyllysine modification is found at K57.

It belongs to the ATPase protein 8 family. As to quaternary structure, F-type ATPases have 2 components, CF(1) - the catalytic core - and CF(0) - the membrane proton channel. Component of an ATP synthase complex composed of ATP5PB, ATP5MC1, ATP5F1E, ATP5PD, ATP5ME, ATP5PF, ATP5MF, MT-ATP6, MT-ATP8, ATP5F1A, ATP5F1B, ATP5F1D, ATP5F1C, ATP5PO, ATP5MG, ATP5MK and ATP5MJ. Interacts with PRICKLE3.

Its subcellular location is the mitochondrion membrane. In terms of biological role, mitochondrial membrane ATP synthase (F(1)F(0) ATP synthase or Complex V) produces ATP from ADP in the presence of a proton gradient across the membrane which is generated by electron transport complexes of the respiratory chain. F-type ATPases consist of two structural domains, F(1) - containing the extramembraneous catalytic core and F(0) - containing the membrane proton channel, linked together by a central stalk and a peripheral stalk. During catalysis, ATP synthesis in the catalytic domain of F(1) is coupled via a rotary mechanism of the central stalk subunits to proton translocation. Part of the complex F(0) domain. Minor subunit located with subunit a in the membrane. The protein is ATP synthase protein 8 (MT-ATP8) of Vicugna pacos (Alpaca).